We begin with the raw amino-acid sequence, 236 residues long: Purine nucleoside phosphorylase DeoD-type 2 (236 aa).

Histidine 5 serves as a coordination point for a purine D-ribonucleoside. Phosphate-binding positions include glycine 21, arginine 25, arginine 44, and arginine 88 to serine 91. Residues aspartate 180–glutamate 182 and serine 204–aspartate 205 contribute to the a purine D-ribonucleoside site. The active-site Proton donor is the aspartate 205.

It belongs to the PNP/UDP phosphorylase family. Homohexamer; trimer of homodimers.

The catalysed reaction is a purine D-ribonucleoside + phosphate = a purine nucleobase + alpha-D-ribose 1-phosphate. The enzyme catalyses a purine 2'-deoxy-D-ribonucleoside + phosphate = a purine nucleobase + 2-deoxy-alpha-D-ribose 1-phosphate. Catalyzes the reversible phosphorolytic breakdown of the N-glycosidic bond in the beta-(deoxy)ribonucleoside molecules, with the formation of the corresponding free purine bases and pentose-1-phosphate. This is Purine nucleoside phosphorylase DeoD-type 2 from Aliivibrio fischeri (strain ATCC 700601 / ES114) (Vibrio fischeri).